Consider the following 119-residue polypeptide: Chorion class CA protein ERA.2 (119 aa).

An N-terminal signal peptide occupies residues 1 to 21 (MSKLVVFLFCIQVCFIQNVYS). Residues 22 to 55 (QCLGRVGPGGPPLGPYGGPLGGPGYGPVGYGGCG) form a left arm region. The segment at 56–103 (GYGGSGIGNVAVAGELPVAGSTGVTGQVPVIGAVEFAGPACAVGSVSI) is central domain. Positions 104–119 (SGACGPTCGCGGSPFY) are right arm.

It belongs to the chorion protein family.

This protein is one of many from the eggshell of the silk moth. The sequence is that of Chorion class CA protein ERA.2 (ERA.2) from Bombyx mori (Silk moth).